A 181-amino-acid chain; its full sequence is ATP synthase subunit b (181 aa).

A helical membrane pass occupies residues 24–44; it reads LFPNLPNFIAHLLATIVLVIV.

It belongs to the ATPase B chain family. In terms of assembly, F-type ATPases have 2 components, F(1) - the catalytic core - and F(0) - the membrane proton channel. F(1) has five subunits: alpha(3), beta(3), gamma(1), delta(1), epsilon(1). F(0) has three main subunits: a(1), b(2) and c(10-14). The alpha and beta chains form an alternating ring which encloses part of the gamma chain. F(1) is attached to F(0) by a central stalk formed by the gamma and epsilon chains, while a peripheral stalk is formed by the delta and b chains.

Its subcellular location is the cell membrane. F(1)F(0) ATP synthase produces ATP from ADP in the presence of a proton or sodium gradient. F-type ATPases consist of two structural domains, F(1) containing the extramembraneous catalytic core and F(0) containing the membrane proton channel, linked together by a central stalk and a peripheral stalk. During catalysis, ATP synthesis in the catalytic domain of F(1) is coupled via a rotary mechanism of the central stalk subunits to proton translocation. In terms of biological role, component of the F(0) channel, it forms part of the peripheral stalk, linking F(1) to F(0). The protein is ATP synthase subunit b of Mycoplasma capricolum subsp. capricolum (strain California kid / ATCC 27343 / NCTC 10154).